The primary structure comprises 624 residues: DNA mismatch repair protein MutL (624 aa).

Residues 360–396 (GGNHFSQPAPRRETASTEPAVARERAPQPAYHSGSGY) are disordered. The span at 369–385 (PRRETASTEPAVARERA) shows a compositional bias: basic and acidic residues.

It belongs to the DNA mismatch repair MutL/HexB family.

Its function is as follows. This protein is involved in the repair of mismatches in DNA. It is required for dam-dependent methyl-directed DNA mismatch repair. May act as a 'molecular matchmaker', a protein that promotes the formation of a stable complex between two or more DNA-binding proteins in an ATP-dependent manner without itself being part of a final effector complex. The protein is DNA mismatch repair protein MutL of Serratia proteamaculans (strain 568).